Consider the following 807-residue polypeptide: Glycerol-3-phosphate acyltransferase (807 aa).

Positions 308–313 match the HXXXXD motif motif; the sequence is CHRSHM.

Belongs to the GPAT/DAPAT family.

The protein resides in the cell inner membrane. The catalysed reaction is sn-glycerol 3-phosphate + an acyl-CoA = a 1-acyl-sn-glycero-3-phosphate + CoA. It participates in phospholipid metabolism; CDP-diacylglycerol biosynthesis; CDP-diacylglycerol from sn-glycerol 3-phosphate: step 1/3. The protein is Glycerol-3-phosphate acyltransferase of Shewanella loihica (strain ATCC BAA-1088 / PV-4).